The chain runs to 472 residues: WASH complex subunit 1 (472 aa).

The tract at residues 1 to 51 (MPQNRSVESQAYSLPLILPDLRREEAIHQITDTLQHLQTVSNDIFSRILQR) is required for WASH complex assembly. 2 disordered regions span residues 294 to 411 (DRQD…GGDL) and 429 to 472 (KVPA…DWES). The segment covering 301 to 334 (LPPPPPPPPPPPPPPPPEPSALSPPAPPPPPLSI) has biased composition (pro residues). A VCA region spans residues 352-472 (QGAPKEVVNP…GDGDEDDWES (121 aa)). Residues 364–386 (GRASLLESIRQAGGIGKANLRNV) enclose the WH2 domain. The span at 385 to 400 (NVKEKKLEKKKMKEQE) shows a compositional bias: basic and acidic residues.

It belongs to the WASH1 family. In terms of assembly, component of the WASH complex.

It is found in the early endosome membrane. The protein resides in the recycling endosome membrane. Its function is as follows. Acts as a nucleation-promoting factor at the surface of endosomes, where it recruits and activates the Arp2/3 complex to induce actin polymerization, playing a key role in the fission of tubules that serve as transport intermediates during endosome sorting. This is WASH complex subunit 1 from Xenopus laevis (African clawed frog).